We begin with the raw amino-acid sequence, 45 residues long: Large ribosomal subunit protein bL34 (45 aa).

Basic residues-rich tracts occupy residues 1-15 (MKAKSHLSNKKRKRA) and 22-45 (MKTKAGRKILARRRAKGRKRIAIK). The tract at residues 1–45 (MKAKSHLSNKKRKRASGFLARMKTKAGRKILARRRAKGRKRIAIK) is disordered.

Belongs to the bacterial ribosomal protein bL34 family.

In Sulfurihydrogenibium sp. (strain YO3AOP1), this protein is Large ribosomal subunit protein bL34.